The chain runs to 151 residues: MLYDVQKIKEILPHRFPFLLVDRVTALTSEESIEAYKNITINEEVFQGHFPIKPVYPGVLVIEGMAQAGGVLAFVSMFGEEASNHDEKIVYFMSIDKAKFRVPVTPGDKLVYRLNVLKHKGSIWILEGRAYVDDKLVAEAELKAMVADKEK.

H49 is a catalytic residue.

Belongs to the thioester dehydratase family. FabZ subfamily.

The protein resides in the cytoplasm. It catalyses the reaction a (3R)-hydroxyacyl-[ACP] = a (2E)-enoyl-[ACP] + H2O. Its function is as follows. Involved in unsaturated fatty acids biosynthesis. Catalyzes the dehydration of short chain beta-hydroxyacyl-ACPs and long chain saturated and unsaturated beta-hydroxyacyl-ACPs. This Wolinella succinogenes (strain ATCC 29543 / DSM 1740 / CCUG 13145 / JCM 31913 / LMG 7466 / NCTC 11488 / FDC 602W) (Vibrio succinogenes) protein is 3-hydroxyacyl-[acyl-carrier-protein] dehydratase FabZ.